A 209-amino-acid chain; its full sequence is Uracil phosphoribosyltransferase (209 aa).

5-phospho-alpha-D-ribose 1-diphosphate-binding positions include arginine 79, arginine 104, and 131-139; that span reads DPMLATGAS. Residues isoleucine 194 and 199-201 contribute to the uracil site; that span reads GDA. Aspartate 200 lines the 5-phospho-alpha-D-ribose 1-diphosphate pocket.

Belongs to the UPRTase family. Requires Mg(2+) as cofactor.

It carries out the reaction UMP + diphosphate = 5-phospho-alpha-D-ribose 1-diphosphate + uracil. Its pathway is pyrimidine metabolism; UMP biosynthesis via salvage pathway; UMP from uracil: step 1/1. With respect to regulation, allosterically activated by GTP. Functionally, catalyzes the conversion of uracil and 5-phospho-alpha-D-ribose 1-diphosphate (PRPP) to UMP and diphosphate. The chain is Uracil phosphoribosyltransferase from Staphylococcus haemolyticus (strain JCSC1435).